A 471-amino-acid chain; its full sequence is Ribulose bisphosphate carboxylase large chain (471 aa).

Lys-5 bears the N6,N6,N6-trimethyllysine mark. Substrate contacts are provided by Asn-114 and Thr-164. Lys-166 functions as the Proton acceptor in the catalytic mechanism. Lys-168 lines the substrate pocket. Mg(2+) is bound by residues Lys-192, Asp-194, and Glu-195. Position 192 is an N6-carboxylysine (Lys-192). His-285 (proton acceptor) is an active-site residue. Substrate-binding residues include Arg-286, His-318, and Ser-370.

This sequence belongs to the RuBisCO large chain family. Type I subfamily. Heterohexadecamer of 8 large chains and 8 small chains; disulfide-linked. The disulfide link is formed within the large subunit homodimers. Mg(2+) is required as a cofactor. In terms of processing, the disulfide bond which can form in the large chain dimeric partners within the hexadecamer appears to be associated with oxidative stress and protein turnover.

It is found in the plastid. It localises to the chloroplast. The catalysed reaction is 2 (2R)-3-phosphoglycerate + 2 H(+) = D-ribulose 1,5-bisphosphate + CO2 + H2O. It catalyses the reaction D-ribulose 1,5-bisphosphate + O2 = 2-phosphoglycolate + (2R)-3-phosphoglycerate + 2 H(+). Its function is as follows. RuBisCO catalyzes two reactions: the carboxylation of D-ribulose 1,5-bisphosphate, the primary event in carbon dioxide fixation, as well as the oxidative fragmentation of the pentose substrate in the photorespiration process. Both reactions occur simultaneously and in competition at the same active site. The polypeptide is Ribulose bisphosphate carboxylase large chain (Schlumbergera truncata (Thanksgiving cactus)).